We begin with the raw amino-acid sequence, 313 residues long: MKLTDGVLRSFRVAKVFRENSDKINCFDFSPTGETVISSSDDDSIVLYDCQEGKPKRTLYSKKYGVDLIRYTHAANTVVYSSNKIDDTIRYLSLHDNKYIRYFPGHSKRVVALSMSPVDDTFISASLDKTIRLWDLRSPNCQGLMHLQGKPVCSFDPEGLIFAAGVNSEMVKLYDLRSFDKGPFATFKMQYDRTCEWTSLKFSQDGKLILMSTNGGFLRLVDAFKGAVMHTFGGYNNSKAVTLEASFTPDSQFIMIGSEDGKIHVWNCESGMKVAVLDGKHTGPITCLQFNPKFMTFASACSNMAFWLPTIDD.

6 WD repeats span residues 19 to 58, 105 to 144, 146 to 184, 192 to 231, 236 to 276, and 280 to 313; these read ENSD…PKRT, GHSK…CQGL, HLQG…KGPF, DRTC…VMHT, NNSK…KVAV, and KHTG…TIDD.

Belongs to the WD repeat SWD2 family. As to quaternary structure, component of the SET1/COMPASS complex. Component of the PNUTS-PP1 phosphatase complex.

It localises to the nucleus. Its subcellular location is the chromosome. The protein localises to the cytoplasm. In terms of biological role, regulatory component of the SET1/COMPASS complex implicated in the tethering of this complex to transcriptional start sites of active genes. Facilitates histone H3 'Lys-4' methylation (H3K4me) via recruitment of the SETD1A or SETD1B to the 'Ser-5' phosphorylated C-terminal domain (CTD) of RNA polymerase II large subunit (POLR2A). Component of the PNUTS-PP1 protein phosphatase complex, a protein phosphatase 1 (PP1) complex that promotes RNA polymerase II transcription pause-release, allowing transcription elongation. This chain is WD repeat-containing protein 82-A (wdr82-a), found in Xenopus laevis (African clawed frog).